Consider the following 234-residue polypeptide: Ribitol-5-phosphate cytidylyltransferase (234 aa).

Residues 7–10 (LAGG) and 79–85 (GSIVQKS) each bind CTP.

This sequence belongs to the IspD/TarI cytidylyltransferase family. TarI subfamily.

The enzyme catalyses D-ribitol 5-phosphate + CTP + H(+) = CDP-L-ribitol + diphosphate. Its pathway is cell wall biogenesis; poly(ribitol phosphate) teichoic acid biosynthesis. Catalyzes the transfer of the cytidylyl group of CTP to D-ribitol 5-phosphate. The chain is Ribitol-5-phosphate cytidylyltransferase from Lacticaseibacillus paracasei (strain ATCC 334 / BCRC 17002 / CCUG 31169 / CIP 107868 / KCTC 3260 / NRRL B-441) (Lactobacillus paracasei).